We begin with the raw amino-acid sequence, 238 residues long: 2-C-methyl-D-erythritol 4-phosphate cytidylyltransferase (238 aa).

It belongs to the IspD/TarI cytidylyltransferase family. IspD subfamily.

It catalyses the reaction 2-C-methyl-D-erythritol 4-phosphate + CTP + H(+) = 4-CDP-2-C-methyl-D-erythritol + diphosphate. It participates in isoprenoid biosynthesis; isopentenyl diphosphate biosynthesis via DXP pathway; isopentenyl diphosphate from 1-deoxy-D-xylulose 5-phosphate: step 2/6. Catalyzes the formation of 4-diphosphocytidyl-2-C-methyl-D-erythritol from CTP and 2-C-methyl-D-erythritol 4-phosphate (MEP). This chain is 2-C-methyl-D-erythritol 4-phosphate cytidylyltransferase, found in Acinetobacter baumannii (strain SDF).